Here is a 446-residue protein sequence, read N- to C-terminus: AP-2 complex subunit mu (446 aa).

Residues Ser145, Ser151, and Ser152 each carry the phosphoserine modification. A Phosphothreonine modification is found at Thr157. The region spanning Lys177–Arg445 is the MHD domain.

It belongs to the adaptor complexes medium subunit family. Adaptor protein complex 2 (AP-2) is a heterotetramer composed of two large adaptins (alpha-type subunit apl3 and beta-type subunit apl1), a medium chain (mu-type subunit apm4) and a small adaptin (sigma-type subunit aps2).

It localises to the cell membrane. It is found in the membrane. The protein localises to the coated pit. Component of the adaptor complexes which link clathrin to receptors in coated vesicles. Clathrin-associated protein complexes are believed to interact with the cytoplasmic tails of membrane proteins, leading to their selection and concentration. AP50 is a subunit of the plasma membrane adaptor (Potential). This is AP-2 complex subunit mu (apm4) from Schizosaccharomyces pombe (strain 972 / ATCC 24843) (Fission yeast).